Here is a 67-residue protein sequence, read N- to C-terminus: Large ribosomal subunit protein uL29 (67 aa).

The protein belongs to the universal ribosomal protein uL29 family.

The chain is Large ribosomal subunit protein uL29 from Zymomonas mobilis subsp. mobilis (strain ATCC 31821 / ZM4 / CP4).